The sequence spans 488 residues: Glutamyl-tRNA(Gln) amidotransferase subunit A (488 aa).

Active-site charge relay system residues include Lys-77 and Ser-152. Ser-176 serves as the catalytic Acyl-ester intermediate.

This sequence belongs to the amidase family. GatA subfamily. Heterotrimer of A, B and C subunits.

It carries out the reaction L-glutamyl-tRNA(Gln) + L-glutamine + ATP + H2O = L-glutaminyl-tRNA(Gln) + L-glutamate + ADP + phosphate + H(+). Its function is as follows. Allows the formation of correctly charged Gln-tRNA(Gln) through the transamidation of misacylated Glu-tRNA(Gln) in organisms which lack glutaminyl-tRNA synthetase. The reaction takes place in the presence of glutamine and ATP through an activated gamma-phospho-Glu-tRNA(Gln). The polypeptide is Glutamyl-tRNA(Gln) amidotransferase subunit A (Streptococcus thermophilus (strain CNRZ 1066)).